A 125-amino-acid polypeptide reads, in one-letter code: Probable 4-amino-4-deoxy-L-arabinose-phosphoundecaprenol flippase subunit ArnF (125 aa).

Residues 1–2 (MG) are Cytoplasmic-facing. The helical transmembrane segment at 3–23 (VMWGLISVAIASLAQLSLGFA) threads the bilayer. Over 24 to 33 (MMRLPSIAHP) the chain is Periplasmic. The chain crosses the membrane as a helical span at residues 34–54 (LAFISGLGAFNAATLALFAGL). Topologically, residues 55–76 (AGYLVSVFCWQKTLHMLALSKA) are cytoplasmic. The chain crosses the membrane as a helical span at residues 77–97 (YALLSLSYVLVWVASMLLPGL). The Periplasmic segment spans residues 98–100 (QGA). A helical transmembrane segment spans residues 101 to 121 (FSLKAMLGVLCIMAGVMLIFL). The Cytoplasmic portion of the chain corresponds to 122-125 (PARS).

The protein belongs to the ArnF family. As to quaternary structure, heterodimer of ArnE and ArnF.

Its subcellular location is the cell inner membrane. Its pathway is bacterial outer membrane biogenesis; lipopolysaccharide biosynthesis. Translocates 4-amino-4-deoxy-L-arabinose-phosphoundecaprenol (alpha-L-Ara4N-phosphoundecaprenol) from the cytoplasmic to the periplasmic side of the inner membrane. This Salmonella paratyphi A (strain ATCC 9150 / SARB42) protein is Probable 4-amino-4-deoxy-L-arabinose-phosphoundecaprenol flippase subunit ArnF.